Here is a 318-residue protein sequence, read N- to C-terminus: Acetyl-coenzyme A carboxylase carboxyl transferase subunit alpha (318 aa).

In terms of domain architecture, CoA carboxyltransferase C-terminal spans 38-292 (KLEKRLAKLE…NKTITKSLHA (255 aa)).

It belongs to the AccA family. As to quaternary structure, acetyl-CoA carboxylase is a heterohexamer composed of biotin carboxyl carrier protein (AccB), biotin carboxylase (AccC) and two subunits each of ACCase subunit alpha (AccA) and ACCase subunit beta (AccD).

The protein resides in the cytoplasm. The enzyme catalyses N(6)-carboxybiotinyl-L-lysyl-[protein] + acetyl-CoA = N(6)-biotinyl-L-lysyl-[protein] + malonyl-CoA. The protein operates within lipid metabolism; malonyl-CoA biosynthesis; malonyl-CoA from acetyl-CoA: step 1/1. In terms of biological role, component of the acetyl coenzyme A carboxylase (ACC) complex. First, biotin carboxylase catalyzes the carboxylation of biotin on its carrier protein (BCCP) and then the CO(2) group is transferred by the carboxyltransferase to acetyl-CoA to form malonyl-CoA. This chain is Acetyl-coenzyme A carboxylase carboxyl transferase subunit alpha, found in Listeria monocytogenes serotype 4b (strain CLIP80459).